The following is a 399-amino-acid chain: S-adenosylmethionine synthase (399 aa).

Residue His17 coordinates ATP. Residue Asp19 participates in Mg(2+) binding. A K(+)-binding site is contributed by Glu45. L-methionine contacts are provided by Glu58 and Gln101. Residues 101 to 111 are flexible loop; it reads QSADIAMGVDQ. ATP-binding positions include 177 to 179, 244 to 245, Asp253, 259 to 260, Ala276, and Lys280; these read DGK, RF, and RK. L-methionine is bound at residue Asp253. L-methionine is bound at residue Lys284.

The protein belongs to the AdoMet synthase family. In terms of assembly, homotetramer; dimer of dimers. Mg(2+) is required as a cofactor. Requires K(+) as cofactor.

It is found in the cytoplasm. It carries out the reaction L-methionine + ATP + H2O = S-adenosyl-L-methionine + phosphate + diphosphate. It participates in amino-acid biosynthesis; S-adenosyl-L-methionine biosynthesis; S-adenosyl-L-methionine from L-methionine: step 1/1. Catalyzes the formation of S-adenosylmethionine (AdoMet) from methionine and ATP. The overall synthetic reaction is composed of two sequential steps, AdoMet formation and the subsequent tripolyphosphate hydrolysis which occurs prior to release of AdoMet from the enzyme. This Bacillus mycoides (strain KBAB4) (Bacillus weihenstephanensis) protein is S-adenosylmethionine synthase.